The chain runs to 149 residues: Endothelin-1 (149 aa).

The propeptide occupies Ala-1–Ser-33. The tract at residues Val-6–Ala-26 is disordered. Disulfide bonds link Cys-36/Cys-50 and Cys-38/Cys-46. The propeptide occupies Val-57–Lys-149. The interval Cys-93–Cys-107 is endothelin-like.

It belongs to the endothelin/sarafotoxin family.

The protein localises to the secreted. In terms of biological role, endothelins are endothelium-derived vasoconstrictor peptides. Probable ligand for G-protein coupled receptors EDNRA and EDNRB which activates PTK2B, BCAR1, BCAR3 and, GTPases RAP1 and RHOA cascade in glomerular mesangial cells. Also binds the DEAR/FBXW7-AS1 receptor. Promotes mesenteric arterial wall remodeling via activation of ROCK signaling and subsequent colocalization of NFATC3 with F-actin filaments. NFATC3 then translocates to the nucleus where it subsequently promotes the transcription of the smooth muscle hypertrophy and differentiation marker ACTA2. The sequence is that of Endothelin-1 (EDN1) from Cavia porcellus (Guinea pig).